The sequence spans 119 residues: Large ribosomal subunit protein uL18 (119 aa).

It belongs to the universal ribosomal protein uL18 family. Part of the 50S ribosomal subunit; part of the 5S rRNA/L5/L18/L25 subcomplex. Contacts the 5S and 23S rRNAs.

In terms of biological role, this is one of the proteins that bind and probably mediate the attachment of the 5S RNA into the large ribosomal subunit, where it forms part of the central protuberance. The chain is Large ribosomal subunit protein uL18 from Nitratidesulfovibrio vulgaris (strain DP4) (Desulfovibrio vulgaris).